The sequence spans 151 residues: 3-hydroxyacyl-[acyl-carrier-protein] dehydratase FabZ (151 aa).

Residue His-56 is part of the active site.

It belongs to the thioester dehydratase family. FabZ subfamily.

Its subcellular location is the cytoplasm. The catalysed reaction is a (3R)-hydroxyacyl-[ACP] = a (2E)-enoyl-[ACP] + H2O. Functionally, involved in unsaturated fatty acids biosynthesis. Catalyzes the dehydration of short chain beta-hydroxyacyl-ACPs and long chain saturated and unsaturated beta-hydroxyacyl-ACPs. The chain is 3-hydroxyacyl-[acyl-carrier-protein] dehydratase FabZ from Nitrobacter winogradskyi (strain ATCC 25391 / DSM 10237 / CIP 104748 / NCIMB 11846 / Nb-255).